A 462-amino-acid polypeptide reads, in one-letter code: Juvenile hormone epoxide hydrolase (462 aa).

Residues 4–24 (ILSSFVAGVAIGSGLVITYVL) form a helical membrane-spanning segment. The active-site Nucleophile is the aspartate 227. The Proton donor role is filled by tyrosine 372. Histidine 428 serves as the catalytic Proton acceptor.

This sequence belongs to the peptidase S33 family.

The protein resides in the microsome membrane. It is found in the endoplasmic reticulum membrane. It carries out the reaction cis-stilbene oxide + H2O = (1R,2R)-hydrobenzoin. The catalysed reaction is 1-(4-methoxyphenyl)-N-methyl-N-[(3-methyloxetan-3-yl)methyl]methanamine + H2O = 2-{[(4-methoxybenzyl)(methyl)amino]methyl}-2-methylpropane-1,3-diol. Catalyzes juvenile hormone hydrolysis. This chain is Juvenile hormone epoxide hydrolase, found in Manduca sexta (Tobacco hawkmoth).